Here is a 727-residue protein sequence, read N- to C-terminus: Epithelial splicing regulatory protein 2 (727 aa).

The disordered stretch occupies residues 1–22 (MTPPPPPPPPPGPDPAADPAAD). Ser-83 carries the phosphoserine modification. RRM domains follow at residues 257–353 (TVVR…RFLS), 358–438 (VILR…RSTA), and 475–555 (DCVR…PCST). Ser-573 is subject to Phosphoserine.

Belongs to the ESRP family. In terms of assembly, interacts with RBPMS. Epithelial cell-specific.

The protein resides in the nucleus. MRNA splicing factor that regulates the formation of epithelial cell-specific isoforms. Specifically regulates the expression of FGFR2-IIIb, an epithelial cell-specific isoform of FGFR2. Also regulates the splicing of CD44, CTNND1, ENAH, 3 transcripts that undergo changes in splicing during the epithelial-to-mesenchymal transition (EMT). Acts by directly binding specific sequences in mRNAs. Binds the GU-rich sequence motifs in the ISE/ISS-3, a cis-element regulatory region present in the mRNA of FGFR2. This is Epithelial splicing regulatory protein 2 (ESRP2) from Homo sapiens (Human).